The sequence spans 178 residues: Large ribosomal subunit protein uL6 (178 aa).

It belongs to the universal ribosomal protein uL6 family. In terms of assembly, part of the 50S ribosomal subunit.

Its function is as follows. This protein binds to the 23S rRNA, and is important in its secondary structure. It is located near the subunit interface in the base of the L7/L12 stalk, and near the tRNA binding site of the peptidyltransferase center. This is Large ribosomal subunit protein uL6 from Nitratiruptor sp. (strain SB155-2).